The following is a 740-amino-acid chain: 1,4-alpha-glucan branching enzyme GlgB (740 aa).

Asp414 functions as the Nucleophile in the catalytic mechanism. Residue Glu467 is the Proton donor of the active site.

Belongs to the glycosyl hydrolase 13 family. GlgB subfamily. Monomer.

It catalyses the reaction Transfers a segment of a (1-&gt;4)-alpha-D-glucan chain to a primary hydroxy group in a similar glucan chain.. It functions in the pathway glycan biosynthesis; glycogen biosynthesis. Catalyzes the formation of the alpha-1,6-glucosidic linkages in glycogen by scission of a 1,4-alpha-linked oligosaccharide from growing alpha-1,4-glucan chains and the subsequent attachment of the oligosaccharide to the alpha-1,6 position. This chain is 1,4-alpha-glucan branching enzyme GlgB, found in Rhodospirillum rubrum (strain ATCC 11170 / ATH 1.1.1 / DSM 467 / LMG 4362 / NCIMB 8255 / S1).